Here is a 155-residue protein sequence, read N- to C-terminus: FUN14 domain-containing protein 1 (155 aa).

Topologically, residues 1-47 (MATRNPPPQEYESDDDSYEVLDLTEYARRHHWWNRVFGHSSGPMVEK) are cytoplasmic. 2 positions are modified to phosphoserine: Ser13 and Ser17. Tyr18 is subject to Phosphotyrosine; by SRC. Residues 18–21 (YEVL) carry the YXXL motif. Residues 48–68 (YSVATQIVMGGVSGWCAGFLF) traverse the membrane as a helical segment. The Mitochondrial intermembrane portion of the chain corresponds to 69-74 (QKVGKL). Residues 75–95 (AATAVGGGFLLLQIASHSGYV) traverse the membrane as a helical segment. Residues 96-133 (QIDWKRVEKDVNKAKRQIKKRANKAAPEINNIIEEATE) are Cytoplasmic-facing. Lys119 is covalently cross-linked (Glycyl lysine isopeptide (Lys-Gly) (interchain with G-Cter in ubiquitin)). Residues 134 to 154 (FVKQNIVISSGFVGGFLLGLA) traverse the membrane as a helical segment. Residue Ser155 is a topological domain, mitochondrial intermembrane.

This sequence belongs to the FUN14 family. In terms of assembly, interacts (via YXXL motif) with MAP1 LC3 family proteins MAP1LC3A, MAP1LC3B and GABARAP. Interacts with DNM1L/DPR1. Interacts with GPX4. Phosphorylation at Ser-13 by CK2 and at Tyr-18 by SRC inhibits activation of mitophagy. Following hypoxia, dephosphorylated at Tyr-18, leading to interaction with MAP1 LC3 family proteins and triggering mitophagy. Dephosphorylation is mediated by PGAM5. Phosphorylated by ULK1 at Ser-17 which enhances FUNDC1 binding to LC3. Post-translationally, ubiquitinated on Lys-119. Deubiquitinated by USP19; leading to hypoxia-induced DRP1 oligomerization and GTPase activity.

Its subcellular location is the mitochondrion outer membrane. In terms of biological role, integral mitochondrial outer-membrane protein that mediates the formation of mitochondria-associated endoplasmic reticulum membranes (MAMs). In turn, mediates angiogenesis and neoangiogenesis through interference with intracellular Ca(2+) communication and regulation of the vascular endothelial growth factor receptor KDR/VEGFR2 expression at both mRNA and protein levels. Also acts as an activator of hypoxia-induced mitophagy, an important mechanism for mitochondrial quality and homeostasis, by interacting with and recruiting LC3 protein family to mitochondria. Mechanistically, recruits DRP1 at ER-mitochondria contact sites leading to DRP1 oligomerization and GTPase activity to facilitate mitochondrial fission during hypoxia. Additionally, plays a role in hepatic ferroptosis by interacting directly with glutathione peroxidase/GPX4 to facilitate its recruitment into mitochondria through TOM/TIM complex where it is degraded by mitophagy. The protein is FUN14 domain-containing protein 1 (FUNDC1) of Bos taurus (Bovine).